A 278-amino-acid polypeptide reads, in one-letter code: Glycyl-dTMP PLP-dependent decarboxylase (278 aa).

This sequence belongs to the pyridoxal-phosphate-dependent aminodecarboxylase family.

The enzyme catalyses 5-C(alpha)-glycyl-dTMP in DNA + H(+) = 5-aminoethyl-dUMP in DNA + CO2. Converts 5-Calpha-glycinylthymidine (Calpha-GlyT) into 5-aminoethyl-2'-deoxyuridine (5-NedU) as a step in the pathway leading to thymidine hypermodifications in the viral genome. As a final result of the pathway of hypermodification, 5-aminoethyl-2'-deoxyuridine (5-NedU) substitutes for about 30% of thymidines in the viral DNA. These modifications probably prevent degradation of viral genome by the host restriction-modification antiviral defense system. The chain is Glycyl-dTMP PLP-dependent decarboxylase from Pseudomonas aeruginosa.